The chain runs to 267 residues: Phosphate import ATP-binding protein PstB 2 (267 aa).

Residues 21-262 (LSTKDVHVYY…AKLQSTNDYV (242 aa)) form the ABC transporter domain. Residue 53–60 (GPSGSGKS) coordinates ATP.

This sequence belongs to the ABC transporter superfamily. Phosphate importer (TC 3.A.1.7) family. The complex is composed of two ATP-binding proteins (PstB), two transmembrane proteins (PstC and PstA) and a solute-binding protein (PstS).

Its subcellular location is the cell membrane. The catalysed reaction is phosphate(out) + ATP + H2O = ADP + 2 phosphate(in) + H(+). Functionally, part of the ABC transporter complex PstSACB involved in phosphate import. Responsible for energy coupling to the transport system. The protein is Phosphate import ATP-binding protein PstB 2 of Streptococcus pneumoniae serotype 4 (strain ATCC BAA-334 / TIGR4).